Consider the following 181-residue polypeptide: Adenine phosphoribosyltransferase (181 aa).

The protein belongs to the purine/pyrimidine phosphoribosyltransferase family. As to quaternary structure, homodimer.

The protein resides in the cytoplasm. The enzyme catalyses AMP + diphosphate = 5-phospho-alpha-D-ribose 1-diphosphate + adenine. It participates in purine metabolism; AMP biosynthesis via salvage pathway; AMP from adenine: step 1/1. Catalyzes a salvage reaction resulting in the formation of AMP, that is energically less costly than de novo synthesis. The protein is Adenine phosphoribosyltransferase of Neorhizobium galegae (Rhizobium galegae).